The primary structure comprises 398 residues: G2/mitotic-specific cyclin-B2 (398 aa).

Residue Thr-8 is modified to Phosphothreonine. Ser-11, Ser-77, and Ser-92 each carry phosphoserine. Thr-94 carries the phosphothreonine modification. Residues Ser-99, Ser-392, and Ser-398 each carry the phosphoserine modification.

Belongs to the cyclin family. Cyclin AB subfamily. As to quaternary structure, interacts with the CDK1 protein kinase to form a serine/threonine kinase holoenzyme complex also known as maturation promoting factor (MPF). The cyclin subunit imparts substrate specificity to the complex.

In terms of biological role, essential for the control of the cell cycle at the G2/M (mitosis) transition. This Homo sapiens (Human) protein is G2/mitotic-specific cyclin-B2 (CCNB2).